We begin with the raw amino-acid sequence, 570 residues long: Sulfite reductase [NADPH] hemoprotein beta-component (570 aa).

[4Fe-4S] cluster is bound by residues C434, C440, C479, and C483. C483 lines the siroheme pocket.

It belongs to the nitrite and sulfite reductase 4Fe-4S domain family. In terms of assembly, alpha(8)-beta(8). The alpha component is a flavoprotein, the beta component is a hemoprotein. Siroheme serves as cofactor. It depends on [4Fe-4S] cluster as a cofactor.

It carries out the reaction hydrogen sulfide + 3 NADP(+) + 3 H2O = sulfite + 3 NADPH + 4 H(+). The protein operates within sulfur metabolism; hydrogen sulfide biosynthesis; hydrogen sulfide from sulfite (NADPH route): step 1/1. Functionally, component of the sulfite reductase complex that catalyzes the 6-electron reduction of sulfite to sulfide. This is one of several activities required for the biosynthesis of L-cysteine from sulfate. This chain is Sulfite reductase [NADPH] hemoprotein beta-component, found in Escherichia coli O1:K1 / APEC.